A 203-amino-acid polypeptide reads, in one-letter code: NAD(P)H dehydrogenase (quinone) (203 aa).

The region spanning 3–194 (VLIVYYSLYG…DAARFQGRHI (192 aa)) is the Flavodoxin-like domain. FMN is bound by residues 9-14 (SLYGHV) and 82-84 (TRF). Tyr11 serves as a coordination point for NAD(+). Trp102 provides a ligand contact to substrate. Residues 117–123 (STATQHG) and His138 contribute to the FMN site.

It belongs to the WrbA family. FMN is required as a cofactor.

The enzyme catalyses a quinone + NADH + H(+) = a quinol + NAD(+). It carries out the reaction a quinone + NADPH + H(+) = a quinol + NADP(+). This Solidesulfovibrio magneticus (strain ATCC 700980 / DSM 13731 / RS-1) (Desulfovibrio magneticus) protein is NAD(P)H dehydrogenase (quinone).